The primary structure comprises 380 residues: Chaperone protein DnaJ (380 aa).

Residues 5 to 70 (DYYEVLGVAK…QKRAAYDQYG (66 aa)) enclose the J domain. A CR-type zinc finger spans residues 140–218 (GYDTQIRVPS…CHGAGKVKET (79 aa)). Cys-153, Cys-156, Cys-170, Cys-173, Cys-192, Cys-195, Cys-206, and Cys-209 together coordinate Zn(2+). CXXCXGXG motif repeat units lie at residues 153 to 160 (CEVCHGSG), 170 to 177 (CPTCSGSG), 192 to 199 (CPKCHGTG), and 206 to 213 (CGHCHGAG).

This sequence belongs to the DnaJ family. As to quaternary structure, homodimer. The cofactor is Zn(2+).

It is found in the cytoplasm. In terms of biological role, participates actively in the response to hyperosmotic and heat shock by preventing the aggregation of stress-denatured proteins and by disaggregating proteins, also in an autonomous, DnaK-independent fashion. Unfolded proteins bind initially to DnaJ; upon interaction with the DnaJ-bound protein, DnaK hydrolyzes its bound ATP, resulting in the formation of a stable complex. GrpE releases ADP from DnaK; ATP binding to DnaK triggers the release of the substrate protein, thus completing the reaction cycle. Several rounds of ATP-dependent interactions between DnaJ, DnaK and GrpE are required for fully efficient folding. Also involved, together with DnaK and GrpE, in the DNA replication of plasmids through activation of initiation proteins. This chain is Chaperone protein DnaJ, found in Paraburkholderia xenovorans (strain LB400).